We begin with the raw amino-acid sequence, 103 residues long: uncharacterized protein (103 aa).

This is an uncharacterized protein from Archaeoglobus fulgidus (strain ATCC 49558 / DSM 4304 / JCM 9628 / NBRC 100126 / VC-16).